A 201-amino-acid polypeptide reads, in one-letter code: Dephospho-CoA kinase (201 aa).

The DPCK domain maps to 4–201 (VIGLTGGIAS…LLDTWSNIEK (198 aa)). 12 to 17 (ASGKST) provides a ligand contact to ATP.

The protein belongs to the CoaE family.

The protein resides in the cytoplasm. It catalyses the reaction 3'-dephospho-CoA + ATP = ADP + CoA + H(+). It functions in the pathway cofactor biosynthesis; coenzyme A biosynthesis; CoA from (R)-pantothenate: step 5/5. Functionally, catalyzes the phosphorylation of the 3'-hydroxyl group of dephosphocoenzyme A to form coenzyme A. The polypeptide is Dephospho-CoA kinase (Bacillus licheniformis (strain ATCC 14580 / DSM 13 / JCM 2505 / CCUG 7422 / NBRC 12200 / NCIMB 9375 / NCTC 10341 / NRRL NRS-1264 / Gibson 46)).